Here is a 220-residue protein sequence, read N- to C-terminus: Ribonuclease HII (220 aa).

Positions 1–219 (MMIAGIDEAG…VENIREELKK (219 aa)) constitute an RNase H type-2 domain. Residues Asp-7, Glu-8, and Asp-105 each contribute to the a divalent metal cation site.

It belongs to the RNase HII family. The cofactor is Mn(2+). It depends on Mg(2+) as a cofactor.

The protein resides in the cytoplasm. It carries out the reaction Endonucleolytic cleavage to 5'-phosphomonoester.. Its function is as follows. Endonuclease that specifically degrades the RNA of RNA-DNA hybrids. The protein is Ribonuclease HII of Methanosarcina mazei (strain ATCC BAA-159 / DSM 3647 / Goe1 / Go1 / JCM 11833 / OCM 88) (Methanosarcina frisia).